Reading from the N-terminus, the 346-residue chain is Tetraacyldisaccharide 4'-kinase (346 aa).

Position 62-69 (62-69 (TAGGTGKT)) interacts with ATP.

It belongs to the LpxK family.

It carries out the reaction a lipid A disaccharide + ATP = a lipid IVA + ADP + H(+). The protein operates within glycolipid biosynthesis; lipid IV(A) biosynthesis; lipid IV(A) from (3R)-3-hydroxytetradecanoyl-[acyl-carrier-protein] and UDP-N-acetyl-alpha-D-glucosamine: step 6/6. In terms of biological role, transfers the gamma-phosphate of ATP to the 4'-position of a tetraacyldisaccharide 1-phosphate intermediate (termed DS-1-P) to form tetraacyldisaccharide 1,4'-bis-phosphate (lipid IVA). The protein is Tetraacyldisaccharide 4'-kinase of Xanthomonas oryzae pv. oryzae (strain MAFF 311018).